The primary structure comprises 57 residues: Large ribosomal subunit protein bL32 (57 aa).

Positions Met-1–His-38 are disordered. Residues Ala-24–Thr-33 are compositionally biased toward polar residues.

The protein belongs to the bacterial ribosomal protein bL32 family.

The protein is Large ribosomal subunit protein bL32 of Enterobacter sp. (strain 638).